Reading from the N-terminus, the 215-residue chain is ATP-dependent Clp protease proteolytic subunit (215 aa).

Ser-115 functions as the Nucleophile in the catalytic mechanism. Residue His-140 is part of the active site.

Belongs to the peptidase S14 family. As to quaternary structure, fourteen ClpP subunits assemble into 2 heptameric rings which stack back to back to give a disk-like structure with a central cavity, resembling the structure of eukaryotic proteasomes.

The protein localises to the cytoplasm. The enzyme catalyses Hydrolysis of proteins to small peptides in the presence of ATP and magnesium. alpha-casein is the usual test substrate. In the absence of ATP, only oligopeptides shorter than five residues are hydrolyzed (such as succinyl-Leu-Tyr-|-NHMec, and Leu-Tyr-Leu-|-Tyr-Trp, in which cleavage of the -Tyr-|-Leu- and -Tyr-|-Trp bonds also occurs).. Its function is as follows. Cleaves peptides in various proteins in a process that requires ATP hydrolysis. Has a chymotrypsin-like activity. Plays a major role in the degradation of misfolded proteins. The polypeptide is ATP-dependent Clp protease proteolytic subunit (Anaplasma marginale (strain Florida)).